The chain runs to 210 residues: Large ribosomal subunit protein uL4 (210 aa).

Residues 56-80 (FVSGGGKKPWRQKGTGRARAGSTRS) are disordered.

It belongs to the universal ribosomal protein uL4 family. As to quaternary structure, part of the 50S ribosomal subunit.

In terms of biological role, one of the primary rRNA binding proteins, this protein initially binds near the 5'-end of the 23S rRNA. It is important during the early stages of 50S assembly. It makes multiple contacts with different domains of the 23S rRNA in the assembled 50S subunit and ribosome. Functionally, forms part of the polypeptide exit tunnel. The chain is Large ribosomal subunit protein uL4 from Solidesulfovibrio magneticus (strain ATCC 700980 / DSM 13731 / RS-1) (Desulfovibrio magneticus).